Here is an 85-residue protein sequence, read N- to C-terminus: UPF0291 protein SP_1473 (85 aa).

Residues 62–85 (TPEKLRQVQREKGLHGRSLDDPNS) are disordered.

The protein belongs to the UPF0291 family.

It is found in the cytoplasm. This Streptococcus pneumoniae serotype 4 (strain ATCC BAA-334 / TIGR4) protein is UPF0291 protein SP_1473.